We begin with the raw amino-acid sequence, 465 residues long: Ribulose bisphosphate carboxylase large chain (465 aa).

Position 4 is an N6,N6,N6-trimethyllysine (Lys-4). Residues Asn-113 and Thr-163 each contribute to the substrate site. The Proton acceptor role is filled by Lys-165. Lys-167 is a substrate binding site. Mg(2+) contacts are provided by Lys-191, Asp-193, and Glu-194. An N6-carboxylysine modification is found at Lys-191. The active-site Proton acceptor is the His-284. Positions 285, 317, and 369 each coordinate substrate.

This sequence belongs to the RuBisCO large chain family. Type I subfamily. Heterohexadecamer of 8 large chains and 8 small chains. Requires Mg(2+) as cofactor.

Its subcellular location is the plastid. It is found in the chloroplast. It catalyses the reaction 2 (2R)-3-phosphoglycerate + 2 H(+) = D-ribulose 1,5-bisphosphate + CO2 + H2O. The enzyme catalyses D-ribulose 1,5-bisphosphate + O2 = 2-phosphoglycolate + (2R)-3-phosphoglycerate + 2 H(+). Its function is as follows. RuBisCO catalyzes two reactions: the carboxylation of D-ribulose 1,5-bisphosphate, the primary event in carbon dioxide fixation, as well as the oxidative fragmentation of the pentose substrate in the photorespiration process. Both reactions occur simultaneously and in competition at the same active site. The polypeptide is Ribulose bisphosphate carboxylase large chain (Sarracenia flava (Yellow pitcher plant)).